Here is a 29-residue protein sequence, read N- to C-terminus: Varv peptide D (29 aa).

A cross-link (cyclopeptide (Gly-Asn)) is located at residues Gly1–Asn29. Intrachain disulfides connect Cys5–Cys19, Cys9–Cys21, and Cys14–Cys26.

In terms of processing, this is a cyclic peptide.

Its function is as follows. Probably participates in a plant defense mechanism. In Viola arvensis (European field pansy), this protein is Varv peptide D.